The sequence spans 366 residues: Aminomethyltransferase (366 aa).

Belongs to the GcvT family. As to quaternary structure, the glycine cleavage system is composed of four proteins: P, T, L and H.

The catalysed reaction is N(6)-[(R)-S(8)-aminomethyldihydrolipoyl]-L-lysyl-[protein] + (6S)-5,6,7,8-tetrahydrofolate = N(6)-[(R)-dihydrolipoyl]-L-lysyl-[protein] + (6R)-5,10-methylene-5,6,7,8-tetrahydrofolate + NH4(+). Functionally, the glycine cleavage system catalyzes the degradation of glycine. This Bordetella bronchiseptica (strain ATCC BAA-588 / NCTC 13252 / RB50) (Alcaligenes bronchisepticus) protein is Aminomethyltransferase.